The chain runs to 334 residues: Phospho-N-acetylmuramoyl-pentapeptide-transferase (334 aa).

Helical transmembrane passes span 5–25, 52–72, 81–101, 116–136, 148–168, 181–200, 230–250, 256–276, and 309–329; these read VVWLAAGISFLVTLVLGPVTI, PTMGGIMFLIGIAVAGAVLLV, GLVVLAVTLGYGLIGFLDDFI, KILGQLVFATVLAVVAVFKLG, GISFDLGWWPFFFLTLFVLLG, GLASGATVFTATAFAILALV, VFMGDTGSLALGGALGAGAVV, LLVVIGGLYVLETLSVIIQVI, and FWLLSFLFSLVGLLGAQDFWL.

It belongs to the glycosyltransferase 4 family. MraY subfamily. Mg(2+) serves as cofactor.

Its subcellular location is the cell membrane. The catalysed reaction is UDP-N-acetyl-alpha-D-muramoyl-L-alanyl-gamma-D-glutamyl-meso-2,6-diaminopimeloyl-D-alanyl-D-alanine + di-trans,octa-cis-undecaprenyl phosphate = di-trans,octa-cis-undecaprenyl diphospho-N-acetyl-alpha-D-muramoyl-L-alanyl-D-glutamyl-meso-2,6-diaminopimeloyl-D-alanyl-D-alanine + UMP. It participates in cell wall biogenesis; peptidoglycan biosynthesis. In terms of biological role, catalyzes the initial step of the lipid cycle reactions in the biosynthesis of the cell wall peptidoglycan: transfers peptidoglycan precursor phospho-MurNAc-pentapeptide from UDP-MurNAc-pentapeptide onto the lipid carrier undecaprenyl phosphate, yielding undecaprenyl-pyrophosphoryl-MurNAc-pentapeptide, known as lipid I. In Desulforamulus reducens (strain ATCC BAA-1160 / DSM 100696 / MI-1) (Desulfotomaculum reducens), this protein is Phospho-N-acetylmuramoyl-pentapeptide-transferase.